The chain runs to 117 residues: MRAVSGVVRKKKVKKILNMAKGYYGSHSKQMKQAKEAVIRGLKYAYRDRRQKKRMMRRLWTLRINAACRPLGISYSKFINGLKKANVIIDRKALSNLAIDDYKAFEAVVEVAKKALA.

It belongs to the bacterial ribosomal protein bL20 family.

Binds directly to 23S ribosomal RNA and is necessary for the in vitro assembly process of the 50S ribosomal subunit. It is not involved in the protein synthesizing functions of that subunit. In Brachyspira hyodysenteriae (strain ATCC 49526 / WA1), this protein is Large ribosomal subunit protein bL20.